Reading from the N-terminus, the 574-residue chain is Man(5)GlcNAc(2)-PP-dolichol translocation protein RFT1 (574 aa).

Over 1-24 (MAKKNSQLPSTSEQILERSTTGAT) the chain is Lumenal. A helical transmembrane segment spans residues 25–45 (FLMMGQLFTKLVTFILNNLLI). Over 46 to 48 (RFL) the chain is Cytoplasmic. Residues 49-69 (SPRIFGITAFLEFIQGTVLFF) form a helical membrane-spanning segment. Over 70–110 (SRDAIRLSTLRISDSGNGIIDDDDEEEYQETHYKSKVLQTA) the chain is Lumenal. The chain crosses the membrane as a helical span at residues 111–131 (VNFAYIPFWIGFPLSIGLIAW). Topologically, residues 132 to 148 (QYRNINAYFITLPFFRW) are cytoplasmic. Residues 149–169 (SIFLIWLSIIVELLSEPFFIV) traverse the membrane as a helical segment. The Lumenal portion of the chain corresponds to 170–181 (NQFMLNYAARSR). Residues 182–202 (FESIAVTTGCIVNFIVVYAVQ) traverse the membrane as a helical segment. At 203–218 (QSRYPMGVVTSDIDKE) the chain is on the cytoplasmic side. A helical membrane pass occupies residues 219–239 (GIAILAFALGKLAHSITLLAC). The Lumenal segment spans residues 240 to 319 (YYWDYLKNFK…INSLCTVEEQ (80 aa)). The chain crosses the membrane as a helical span at residues 320–340 (GIYALLSNYGSLLTRLLFAPI). At 341-372 (EESLRLFLARLLSSHNPKNLKLSIEVLVNLTR) the chain is on the cytoplasmic side. A helical transmembrane segment spans residues 373-393 (FYIYLSLMIIVFGPANSSFLL). Over 394 to 413 (QFLIGSKWSTTSVLDTIRVY) the chain is Lumenal. The chain crosses the membrane as a helical span at residues 414–434 (CFYIPFLSLNGIFEAFFQSVA). At 435 to 443 (TGDQILKHS) the chain is on the cytoplasmic side. The helical transmembrane segment at 444-464 (YFMMAFSGIFLLNSWLLIEKL) threads the bilayer. Over 465 to 469 (KLSIE) the chain is Lumenal. Residues 470-490 (GLILSNIINMVLRILYCGVFL) traverse the membrane as a helical segment. At 491–509 (NKFHRELFTDSSFFFNFKD) the chain is on the cytoplasmic side. The helical transmembrane segment at 510–530 (FKTVIIAGSTICLLDWWFIGY) threads the bilayer. Residues 531 to 532 (VK) lie on the Lumenal side of the membrane. Residues 533–553 (NLQQFVVNVLFAMGLLALILV) form a helical membrane-spanning segment. The Cytoplasmic portion of the chain corresponds to 554–574 (KERQTIQSFINKRAVSNSKDV).

The protein belongs to the RFT1 family.

Its subcellular location is the endoplasmic reticulum membrane. It participates in protein modification; protein glycosylation. Functionally, intramembrane glycolipid transporter that operates in the biosynthetic pathway of dolichol-linked oligosaccharides, the glycan precursors employed in protein asparagine (N)-glycosylation. The sequential addition of sugars to dolichol pyrophosphate produces dolichol-linked oligosaccharides containing fourteen sugars, including two GlcNAcs, nine mannoses and three glucoses. Once assembled, the oligosaccharide is transferred from the lipid to nascent proteins by oligosaccharyltransferases. The assembly of dolichol-linked oligosaccharides begins on the cytosolic side of the endoplasmic reticulum membrane and finishes in its lumen. RFT1 could mediate the translocation of the cytosolically oriented intermediate DolPP-GlcNAc2Man5, produced by ALG11, into the ER lumen where dolichol-linked oligosaccharides assembly continues. However, the intramembrane lipid transporter activity could not be confirmed in vitro. This is Man(5)GlcNAc(2)-PP-dolichol translocation protein RFT1 from Saccharomyces cerevisiae (strain ATCC 204508 / S288c) (Baker's yeast).